We begin with the raw amino-acid sequence, 176 residues long: Phosphopantetheine adenylyltransferase (176 aa).

Residue T11 coordinates substrate. Residues 11-12 (TF) and H19 contribute to the ATP site. The substrate site is built by K43, L93, and R107. ATP is bound by residues E117 and 141 to 147 (LSVVSSS).

This sequence belongs to the bacterial CoaD family. Homohexamer. Requires Mg(2+) as cofactor.

Its subcellular location is the cytoplasm. The enzyme catalyses (R)-4'-phosphopantetheine + ATP + H(+) = 3'-dephospho-CoA + diphosphate. It functions in the pathway cofactor biosynthesis; coenzyme A biosynthesis; CoA from (R)-pantothenate: step 4/5. Its function is as follows. Reversibly transfers an adenylyl group from ATP to 4'-phosphopantetheine, yielding dephospho-CoA (dPCoA) and pyrophosphate. The protein is Phosphopantetheine adenylyltransferase of Tropheryma whipplei (strain TW08/27) (Whipple's bacillus).